We begin with the raw amino-acid sequence, 445 residues long: MERAPPDGLMNASGTLAGEAAAAGGARGFSAAWTAVLAALMALLIVATVLGNALVMLAFVADSSLRTQNNFFLLNLAISDFLVGAFCIPLYVPYVLTGRWTFGRGLCKLWLVVDYLLCASSVFNIVLISYDRFLSVTRAVSYRAQQGDTRRAVRKMALVWVLAFLLYGPAILSWEYLSGGSSIPEGHCYAEFFYNWYFLITASTLEFFTPFLSVTFFNLSIYLNIQRRTRLRLDGGREAGPEPPPDAQPSPPPAPPSCWGCWPKGHGEAMPLHRYGVGEAGPGVEAGEAALGGGSGGGAAASPTSSSGSSSRGTERPRSLKRGSKPSASSASLEKRMKMVSQSITQRFRLSRDKKVAKSLAIIVSIFGLCWAPYTLLMIIRAACHGRCIPDYWYETSFWLLWANSAVNPVLYPLCHYSFRRAFTKLLCPQKLKVQPHGSLEQCWK.

At 1–39 (MERAPPDGLMNASGTLAGEAAAAGGARGFSAAWTAVLAA) the chain is on the extracellular side. Asn-11 carries N-linked (GlcNAc...) asparagine glycosylation. Residues 40–60 (LMALLIVATVLGNALVMLAFV) form a helical membrane-spanning segment. The Cytoplasmic segment spans residues 61-70 (ADSSLRTQNN). The chain crosses the membrane as a helical span at residues 71–91 (FFLLNLAISDFLVGAFCIPLY). The Extracellular portion of the chain corresponds to 92-108 (VPYVLTGRWTFGRGLCK). The cysteines at positions 107 and 188 are disulfide-linked. A helical membrane pass occupies residues 109–129 (LWLVVDYLLCASSVFNIVLIS). The Cytoplasmic segment spans residues 130-156 (YDRFLSVTRAVSYRAQQGDTRRAVRKM). Residues 157-177 (ALVWVLAFLLYGPAILSWEYL) form a helical membrane-spanning segment. Over 178–196 (SGGSSIPEGHCYAEFFYNW) the chain is Extracellular. Residues 197 to 217 (YFLITASTLEFFTPFLSVTFF) form a helical membrane-spanning segment. At 218-359 (NLSIYLNIQR…LSRDKKVAKS (142 aa)) the chain is on the cytoplasmic side. Disordered regions lie at residues 234–259 (DGGR…PSCW) and 286–336 (AGEA…LEKR). The span at 241 to 256 (PEPPPDAQPSPPPAPP) shows a compositional bias: pro residues. Positions 290-299 (ALGGGSGGGA) are enriched in gly residues. Low complexity predominate over residues 300–312 (AASPTSSSGSSSR). A helical transmembrane segment spans residues 360 to 380 (LAIIVSIFGLCWAPYTLLMII). The Extracellular segment spans residues 381 to 396 (RAACHGRCIPDYWYET). A helical membrane pass occupies residues 397–417 (SFWLLWANSAVNPVLYPLCHY). At 418–445 (SFRRAFTKLLCPQKLKVQPHGSLEQCWK) the chain is on the cytoplasmic side. At Ser-439 the chain carries Phosphoserine.

Belongs to the G-protein coupled receptor 1 family. As to expression, expressed abundantly in brain, most notably throughout the thalamus, the ventromedial hypothalamus and the caudate nucleus. Isoform 1 is largely predominant in all tissues.

The protein resides in the cell membrane. Functionally, the H3 subclass of histamine receptors could mediate the histamine signals in CNS and peripheral nervous system. Signals through the inhibition of adenylate cyclase and displays high constitutive activity (spontaneous activity in the absence of agonist). The polypeptide is Histamine H3 receptor (Hrh3) (Rattus norvegicus (Rat)).